Reading from the N-terminus, the 60-residue chain is Large ribosomal subunit protein uL30 (60 aa).

The protein belongs to the universal ribosomal protein uL30 family. In terms of assembly, part of the 50S ribosomal subunit.

The sequence is that of Large ribosomal subunit protein uL30 from Thermus thermophilus (strain ATCC BAA-163 / DSM 7039 / HB27).